A 236-amino-acid polypeptide reads, in one-letter code: uncharacterized protein (236 aa).

The N-terminal stretch at 1–24 is a signal peptide; it reads MRKKHFNMILKLALISSLLALAAS. Asn-59, Asn-171, and Asn-197 each carry an N-linked (GlcNAc...) asparagine glycan.

The protein localises to the secreted. This is an uncharacterized protein from Caenorhabditis elegans.